Here is a 496-residue protein sequence, read N- to C-terminus: Cytosol aminopeptidase (496 aa).

Residues Lys258 and Asp263 each contribute to the Mn(2+) site. Lys270 is an active-site residue. Positions 281, 340, and 342 each coordinate Mn(2+). Arg344 is an active-site residue.

The protein belongs to the peptidase M17 family. Requires Mn(2+) as cofactor.

Its subcellular location is the cytoplasm. The enzyme catalyses Release of an N-terminal amino acid, Xaa-|-Yaa-, in which Xaa is preferably Leu, but may be other amino acids including Pro although not Arg or Lys, and Yaa may be Pro. Amino acid amides and methyl esters are also readily hydrolyzed, but rates on arylamides are exceedingly low.. The catalysed reaction is Release of an N-terminal amino acid, preferentially leucine, but not glutamic or aspartic acids.. Its function is as follows. Presumably involved in the processing and regular turnover of intracellular proteins. Catalyzes the removal of unsubstituted N-terminal amino acids from various peptides. The protein is Cytosol aminopeptidase (pepA) of Helicobacter pylori (strain ATCC 700392 / 26695) (Campylobacter pylori).